A 330-amino-acid polypeptide reads, in one-letter code: Beta-ketoacyl-[acyl-carrier-protein] synthase III (330 aa).

Residues Cys-114 and His-255 contribute to the active site. The segment at 256–260 (QANQR) is ACP-binding. Residue Asn-285 is part of the active site.

This sequence belongs to the thiolase-like superfamily. FabH family. Homodimer.

The protein resides in the cytoplasm. The catalysed reaction is malonyl-[ACP] + acetyl-CoA + H(+) = 3-oxobutanoyl-[ACP] + CO2 + CoA. Its pathway is lipid metabolism; fatty acid biosynthesis. Catalyzes the condensation reaction of fatty acid synthesis by the addition to an acyl acceptor of two carbons from malonyl-ACP. Catalyzes the first condensation reaction which initiates fatty acid synthesis and may therefore play a role in governing the total rate of fatty acid production. Possesses both acetoacetyl-ACP synthase and acetyl transacylase activities. Its substrate specificity determines the biosynthesis of branched-chain and/or straight-chain of fatty acids. This Trichormus variabilis (strain ATCC 29413 / PCC 7937) (Anabaena variabilis) protein is Beta-ketoacyl-[acyl-carrier-protein] synthase III.